We begin with the raw amino-acid sequence, 299 residues long: Circadian clock oscillator protein KaiA (299 aa).

Positions 9–148 (SRPQIFICTL…LQLSKACRLP (140 aa)) are psR domain, binds oxidized quinones. Residues 9 to 179 (SRPQIFICTL…RLSQKLKERL (171 aa)) enclose the KaiA N-terminal domain. The interval 180 to 188 (GYLGVYYKR) is flexible linker. Residues 189 to 297 (NPQQFFHKLT…CEMYRRSIPK (109 aa)) form the KaiA C-terminal domain.

In terms of assembly, homodimer. The KaiABC complex composition changes during the circadian cycle to control KaiC phosphorylation. Complexes KaiC(6), KaiA(2-4):KaiC(6), KaiB(6):KaiC(6) and KaiC(6):KaiB(6):KaiA(12) are among the most important forms, many form cooperatively. KaiA and CikA bind to the same region of the KaiB(fs) form and therefore compete.

Its function is as follows. Key component of the KaiABC oscillator complex, which constitutes the main circadian regulator in cyanobacteria. Complex composition changes during the circadian cycle to control KaiC phosphorylation. KaiA stimulates KaiC autophosphorylation, while KaiB sequesters KaiA, leading to KaiC autodephosphorylation. KaiA binding to the KaiC CII domain during the subjective day yields KaiA(2-4):KaiC(6) complexes which stimulate KaiC autophosphorylation. Phospho-Ser-431 KaiC accumulation triggers binding of KaiB during the subjective night to form the KaiB(6):KaiC(6) complex, leading to changes in the output regulators CikA and SasA. KaiB(6):KaiC(6) formation exposes a site for KaiA binding on KaiB that sequesters KaiA from KaiC's CII domain, making the KaiC(6):KaiB(6):KaiA(12) complex resulting in KaiC autodephosphorylation. Complete dephosphorylation of KaiC leads to dissociation of KaiA(2):KaiB(1), completing 1 cycle of the Kai oscillator. Binds oxidized quinones via the N-terminal PsR domain, allowing it to sense redox changes and possibly mediate clock input. The chain is Circadian clock oscillator protein KaiA from Acaryochloris marina (strain MBIC 11017).